Here is a 1232-residue protein sequence, read N- to C-terminus: DNA-directed RNA polymerase subunit beta (1232 aa).

Residues 1170-1232 (SVDEDADELE…LDLDDFGDEH (63 aa)) are disordered. The segment covering 1171 to 1180 (VDEDADELEV) has biased composition (acidic residues). Residues 1189-1198 (PEEKEEKEKE) are compositionally biased toward basic and acidic residues. Over residues 1199 to 1232 (DSDEYDDLREEDVEPDLEELSLDDLDLDDFGDEH) the composition is skewed to acidic residues.

It belongs to the RNA polymerase beta chain family. As to quaternary structure, the RNAP catalytic core consists of 2 alpha, 1 beta, 1 beta' and 1 omega subunit. When a sigma factor is associated with the core the holoenzyme is formed, which can initiate transcription.

The catalysed reaction is RNA(n) + a ribonucleoside 5'-triphosphate = RNA(n+1) + diphosphate. DNA-dependent RNA polymerase catalyzes the transcription of DNA into RNA using the four ribonucleoside triphosphates as substrates. The protein is DNA-directed RNA polymerase subunit beta of Clostridium botulinum (strain Okra / Type B1).